The following is a 180-amino-acid chain: Tubulin polymerization-promoting protein homolog (180 aa).

Composition is skewed to basic and acidic residues over residues 136–158 (TGAH…RADT) and 169–180 (KNKDSYDKTHGK). The interval 136-180 (TGAHKERFDAEGKGKGKSGRADTTENTGYVGAYKNKDSYDKTHGK) is disordered.

This sequence belongs to the TPPP family.

Regulator of microtubule dynamics. The protein is Tubulin polymerization-promoting protein homolog of Caenorhabditis elegans.